We begin with the raw amino-acid sequence, 171 residues long: Large ribosomal subunit protein uL10 (171 aa).

This sequence belongs to the universal ribosomal protein uL10 family. In terms of assembly, part of the ribosomal stalk of the 50S ribosomal subunit. The N-terminus interacts with L11 and the large rRNA to form the base of the stalk. The C-terminus forms an elongated spine to which L12 dimers bind in a sequential fashion forming a multimeric L10(L12)X complex.

Its function is as follows. Forms part of the ribosomal stalk, playing a central role in the interaction of the ribosome with GTP-bound translation factors. In Erythrobacter litoralis (strain HTCC2594), this protein is Large ribosomal subunit protein uL10.